Reading from the N-terminus, the 165-residue chain is Shikimate kinase (165 aa).

ATP is bound at residue 11-16 (GAGKTT). T15 is a binding site for Mg(2+). Residues D33, R57, and G78 each coordinate substrate. An ATP-binding site is contributed by R116. R134 serves as a coordination point for substrate.

It belongs to the shikimate kinase family. Monomer. The cofactor is Mg(2+).

Its subcellular location is the cytoplasm. It catalyses the reaction shikimate + ATP = 3-phosphoshikimate + ADP + H(+). It participates in metabolic intermediate biosynthesis; chorismate biosynthesis; chorismate from D-erythrose 4-phosphate and phosphoenolpyruvate: step 5/7. Its function is as follows. Catalyzes the specific phosphorylation of the 3-hydroxyl group of shikimic acid using ATP as a cosubstrate. This Bacillus cereus (strain AH187) protein is Shikimate kinase.